The sequence spans 373 residues: S-adenosylmethionine:tRNA ribosyltransferase-isomerase (373 aa).

This sequence belongs to the QueA family. In terms of assembly, monomer.

Its subcellular location is the cytoplasm. The enzyme catalyses 7-aminomethyl-7-carbaguanosine(34) in tRNA + S-adenosyl-L-methionine = epoxyqueuosine(34) in tRNA + adenine + L-methionine + 2 H(+). The protein operates within tRNA modification; tRNA-queuosine biosynthesis. In terms of biological role, transfers and isomerizes the ribose moiety from AdoMet to the 7-aminomethyl group of 7-deazaguanine (preQ1-tRNA) to give epoxyqueuosine (oQ-tRNA). This chain is S-adenosylmethionine:tRNA ribosyltransferase-isomerase, found in Caulobacter sp. (strain K31).